The following is a 327-amino-acid chain: Eukaryotic translation initiation factor 3 subunit I (327 aa).

5 WD repeats span residues 8–49 (GHER…GSYD), 51–89 (HNGA…CLYT), 188–227 (VHRY…KLKQ), 229–268 (KSER…GHFE), and 285–324 (GHFG…LGFT).

It belongs to the eIF-3 subunit I family. In terms of assembly, component of the eukaryotic translation initiation factor 3 (eIF-3) complex.

The protein localises to the cytoplasm. Functionally, component of the eukaryotic translation initiation factor 3 (eIF-3) complex, which is involved in protein synthesis of a specialized repertoire of mRNAs and, together with other initiation factors, stimulates binding of mRNA and methionyl-tRNAi to the 40S ribosome. The eIF-3 complex specifically targets and initiates translation of a subset of mRNAs involved in cell proliferation. This Caenorhabditis elegans protein is Eukaryotic translation initiation factor 3 subunit I.